We begin with the raw amino-acid sequence, 210 residues long: MSRLEDYLSVYFITDSEFGRTHEELAEMALRAGVRAIQFREKKLSTKRMYEIGKRLRALTRDYDALFFVNDRIDVALAVDADGVHIGQDDMPAFAAREIFPGYIGVSAGNVEEAKKDERFADYLGVGPVFPTKTKEDAGEAIGIEGLRRIVESVSVPVVAIGSINKQNAIEVLKTGVAGIAVISAIAAADDPERAARELVELVRRFKSGL.

4-amino-2-methyl-5-(diphosphooxymethyl)pyrimidine contacts are provided by residues 38–42 and Asn-70; that span reads QFREK. Mg(2+) contacts are provided by Asp-71 and Asp-90. A 4-amino-2-methyl-5-(diphosphooxymethyl)pyrimidine-binding site is contributed by Ser-107. 132–134 serves as a coordination point for 2-[(2R,5Z)-2-carboxy-4-methylthiazol-5(2H)-ylidene]ethyl phosphate; the sequence is TKT. Lys-135 is a 4-amino-2-methyl-5-(diphosphooxymethyl)pyrimidine binding site. 183-184 contributes to the 2-[(2R,5Z)-2-carboxy-4-methylthiazol-5(2H)-ylidene]ethyl phosphate binding site; the sequence is IS.

Belongs to the thiamine-phosphate synthase family. Requires Mg(2+) as cofactor.

The enzyme catalyses 2-[(2R,5Z)-2-carboxy-4-methylthiazol-5(2H)-ylidene]ethyl phosphate + 4-amino-2-methyl-5-(diphosphooxymethyl)pyrimidine + 2 H(+) = thiamine phosphate + CO2 + diphosphate. The catalysed reaction is 2-(2-carboxy-4-methylthiazol-5-yl)ethyl phosphate + 4-amino-2-methyl-5-(diphosphooxymethyl)pyrimidine + 2 H(+) = thiamine phosphate + CO2 + diphosphate. It catalyses the reaction 4-methyl-5-(2-phosphooxyethyl)-thiazole + 4-amino-2-methyl-5-(diphosphooxymethyl)pyrimidine + H(+) = thiamine phosphate + diphosphate. It functions in the pathway cofactor biosynthesis; thiamine diphosphate biosynthesis; thiamine phosphate from 4-amino-2-methyl-5-diphosphomethylpyrimidine and 4-methyl-5-(2-phosphoethyl)-thiazole: step 1/1. Its function is as follows. Condenses 4-methyl-5-(beta-hydroxyethyl)thiazole monophosphate (THZ-P) and 2-methyl-4-amino-5-hydroxymethyl pyrimidine pyrophosphate (HMP-PP) to form thiamine monophosphate (TMP). This chain is Thiamine-phosphate synthase, found in Archaeoglobus fulgidus (strain ATCC 49558 / DSM 4304 / JCM 9628 / NBRC 100126 / VC-16).